The following is a 195-amino-acid chain: GTP cyclohydrolase-2 (195 aa).

48 to 52 (RIHSE) is a binding site for GTP. The Zn(2+) site is built by Cys-53, Cys-64, and Cys-66. Residues Gln-69, 90 to 92 (EGR), and Thr-112 each bind GTP. Asp-124 serves as the catalytic Proton acceptor. Arg-126 functions as the Nucleophile in the catalytic mechanism. Residues Thr-147 and Lys-152 each coordinate GTP.

It belongs to the GTP cyclohydrolase II family. Zn(2+) is required as a cofactor.

The enzyme catalyses GTP + 4 H2O = 2,5-diamino-6-hydroxy-4-(5-phosphoribosylamino)-pyrimidine + formate + 2 phosphate + 3 H(+). Its pathway is cofactor biosynthesis; riboflavin biosynthesis; 5-amino-6-(D-ribitylamino)uracil from GTP: step 1/4. In terms of biological role, catalyzes the conversion of GTP to 2,5-diamino-6-ribosylamino-4(3H)-pyrimidinone 5'-phosphate (DARP), formate and pyrophosphate. The protein is GTP cyclohydrolase-2 of Campylobacter fetus subsp. fetus (strain 82-40).